A 262-amino-acid polypeptide reads, in one-letter code: Shikimate dehydrogenase (NADP(+)) (262 aa).

Shikimate is bound by residues 15 to 17 (SRS) and T62. K66 (proton acceptor) is an active-site residue. NADP(+) is bound at residue E78. 2 residues coordinate shikimate: N87 and D102. Residues 126–130 (GAGGA), 150–155 (NRTLAR), and M214 each bind NADP(+). Y216 is a shikimate binding site. G236 serves as a coordination point for NADP(+).

This sequence belongs to the shikimate dehydrogenase family. In terms of assembly, homodimer.

It carries out the reaction shikimate + NADP(+) = 3-dehydroshikimate + NADPH + H(+). It participates in metabolic intermediate biosynthesis; chorismate biosynthesis; chorismate from D-erythrose 4-phosphate and phosphoenolpyruvate: step 4/7. Involved in the biosynthesis of the chorismate, which leads to the biosynthesis of aromatic amino acids. Catalyzes the reversible NADPH linked reduction of 3-dehydroshikimate (DHSA) to yield shikimate (SA). The sequence is that of Shikimate dehydrogenase (NADP(+)) from Acinetobacter baumannii (strain ACICU).